The following is a 488-amino-acid chain: Tocopherol cyclase, chloroplastic (488 aa).

The transit peptide at 1–76 (MEIRSLIVSM…VPTSPNRELR (76 aa)) directs the protein to the chloroplast.

The protein localises to the plastid. It localises to the chloroplast. Its subcellular location is the plastoglobule. The enzyme catalyses delta-tocopherol = 2-methyl-6-phytyl-1,4-benzene-1,4-diol. It catalyses the reaction gamma-tocopherol = 2,3-dimethyl-6-phytylbenzene-1,4-diol. The catalysed reaction is delta-tocotrienol = 6-geranylgeranyl-2-methylbenzene-1,4-diol. It carries out the reaction gamma-tocotrienol = 6-geranylgeranyl-2,3-dimethylbenzene-1,4-diol. It functions in the pathway cofactor biosynthesis; tocopherol biosynthesis. Its function is as follows. Involved in the synthesis of both tocopherols and tocotrienols (vitamin E), which presumably protect photosynthetic complexes from oxidative stress. Catalyzes the conversion of 2-methyl-6-phytyl-1,4-hydroquinone and 2,3-dimethyl-5-phytyl-1,4-hydroquinone (DMPQ) to delta- and gamma-tocopherol respectively. Also converts 2,3-dimethyl-5-geranylgeranyl-1,4-hydroquinone (DMGQ) to gamma-tocotrienol. The sequence is that of Tocopherol cyclase, chloroplastic (VTE1) from Arabidopsis thaliana (Mouse-ear cress).